A 263-amino-acid chain; its full sequence is Antigen 10-3 (263 aa).

The first 21 residues, 1–21 (MNIYLIGILCIVGLIISQGST), serve as a signal peptide directing secretion. A disordered region spans residues 70 to 207 (GNKKDKQPTQ…QINDGTSDKP (138 aa)). The span at 78–90 (TQKTTPKPTTPKQ) shows a compositional bias: low complexity. Tandem repeats lie at residues 81–107 (TTPKPTTPKQINDGTSDKTSDTHTIKR), 108–134 (TTPKPTTPKQINDGTSDKTSDTHTIKR), 135–161 (TTPKPTTPKQINDGTSDKTSDTHTIKR), 162–188 (TTPKPTTPKQINDGTSDKTSDTHTIKR), and 189–206 (TTPKPTTPKQINDGTSDK). Residues 81 to 189 (TTPKPTTPKQ…TSDTHTIKRT (109 aa)) form a 5 X 27 AA tandem repeats region. Basic and acidic residues-rich tracts occupy residues 95–104 (TSDKTSDTHT), 122–131 (TSDKTSDTHT), 149–158 (TSDKTSDTHT), and 176–185 (TSDKTSDTHT).

The protein is Antigen 10-3 of Schistosoma mansoni (Blood fluke).